Reading from the N-terminus, the 161-residue chain is Transcriptional repressor NrdR (161 aa).

Over residues 1–11 (MRCPSCNSLDT) the composition is skewed to polar residues. Residues 1-20 (MRCPSCNSLDTQVKDSRPTE) form a disordered region. A zinc finger spans residues 3–34 (CPSCNSLDTQVKDSRPTEDSSVIRRRRVCVTC). The 91-residue stretch at 49-139 (LTVIKRNGRR…VYRNFREAKD (91 aa)) folds into the ATP-cone domain.

The protein belongs to the NrdR family. Requires Zn(2+) as cofactor.

Negatively regulates transcription of bacterial ribonucleotide reductase nrd genes and operons by binding to NrdR-boxes. The polypeptide is Transcriptional repressor NrdR (Bradyrhizobium sp. (strain ORS 278)).